Reading from the N-terminus, the 404-residue chain is Ubiquitin-like modifier-activating enzyme 5 (404 aa).

Positions 83, 104, 127, 150, and 184 each coordinate ATP. Residues Cys-226 and Cys-229 each coordinate Zn(2+). Cys-250 acts as the Glycyl thioester intermediate in catalysis. Zn(2+) contacts are provided by Cys-303 and Cys-308. The segment at 372–393 (APEKSSETSEETVTAATADETS) is disordered. Residues 382–391 (ETVTAATADE) are compositionally biased toward low complexity.

Belongs to the ubiquitin-activating E1 family. UBA5 subfamily.

Functionally, E1-like enzyme which activates UFM1. This is Ubiquitin-like modifier-activating enzyme 5 from Drosophila sechellia (Fruit fly).